The sequence spans 347 residues: Probable dual-specificity RNA methyltransferase RlmN (347 aa).

The active-site Proton acceptor is E91. The 231-residue stretch at Y97–D327 folds into the Radical SAM core domain. C104 and C332 form a disulfide bridge. The [4Fe-4S] cluster site is built by C111, C115, and C118. S-adenosyl-L-methionine contacts are provided by residues G158 to E159, S190, S213 to H215, and N289. The active-site S-methylcysteine intermediate is the C332.

This sequence belongs to the radical SAM superfamily. RlmN family. The cofactor is [4Fe-4S] cluster.

It localises to the cytoplasm. It catalyses the reaction adenosine(2503) in 23S rRNA + 2 reduced [2Fe-2S]-[ferredoxin] + 2 S-adenosyl-L-methionine = 2-methyladenosine(2503) in 23S rRNA + 5'-deoxyadenosine + L-methionine + 2 oxidized [2Fe-2S]-[ferredoxin] + S-adenosyl-L-homocysteine. The catalysed reaction is adenosine(37) in tRNA + 2 reduced [2Fe-2S]-[ferredoxin] + 2 S-adenosyl-L-methionine = 2-methyladenosine(37) in tRNA + 5'-deoxyadenosine + L-methionine + 2 oxidized [2Fe-2S]-[ferredoxin] + S-adenosyl-L-homocysteine. In terms of biological role, specifically methylates position 2 of adenine 2503 in 23S rRNA and position 2 of adenine 37 in tRNAs. The sequence is that of Probable dual-specificity RNA methyltransferase RlmN from Clostridium perfringens (strain 13 / Type A).